The chain runs to 127 residues: Mini-ribonuclease 3-like protein (127 aa).

Asp-19 is an active-site residue.

This sequence belongs to the MrnC RNase family.

In terms of biological role, might be a ribonuclease involved in RNA processing. The polypeptide is Mini-ribonuclease 3-like protein (mrnCL) (Ilyobacter polytropus (strain ATCC 51220 / DSM 2926 / LMG 16218 / CuHBu1)).